Consider the following 852-residue polypeptide: Disease resistance RPP13-like protein 4 (852 aa).

Residues 17–68 adopt a coiled-coil conformation; it reads LEEKGRTVSDYRKQLEDLQSELKYMQSFLKDAERQKRTNETLRTLVADLREL. Residues arginine 149, valine 161, 189–196, arginine 297, and lysine 363 each bind ADP; that span reads GMGGLGKT. The NB-ARC domain occupies 164–410; the sequence is EGDKRKIKEW…MSSLQLSYDE (247 aa). 6 LRR repeats span residues 558–581, 585–609, 633–657, 683–706, 763–786, and 798–824; these read CKYL…ILDE, LQHL…MEDL, FKKL…IGSL, LTNL…ELDS, LPML…FWGN, and LSSL…VTAN.

The protein belongs to the disease resistance NB-LRR family. RPP13 subfamily. In terms of assembly, interacts with ZED1/ZRK5. Component of a stable high-order oligomeric complex made of RKS1 and RPP13L4/ZAR1 which recruits ZED1-related kinases (e.g. uridylylated PBL2 and acetylated ZED1/ZRK5) in the presence of ATP and pathogenic bacteria type III secreted effector (T3SE) proteins (e.g. Pseudomonas syringae HopZ1a and HopF2a and Xanthomonas campestris pv. campestris (Xcc) XopAC/AvrAC) to form a wheel-like pentameric resistosome; this complex triggers immunity toward pathogenic bacteria (e.g. X.campestris and P.syringae), especially in vascular tissues. Interacts with RKS1, ZED1/ZRK5, ZRK3, ZRK6 and ZRK15.

The protein resides in the cell membrane. It is found in the nucleus. Its activity is regulated as follows. Exhibits autoinhibition activity. Its function is as follows. CC-NB-LRR receptor-like protein required for recognition of pathogenic bacteria type III effectors (T3E) such as Pseudomonas syringae HopZ1a and HopF2a and Xanthomonas campestris pv. campestris (Xcc) XopAC/AvrAC; this recognition requires ZED1-related kinases (e.g. PBL2, ZRK3 and ZED1/ZRK5). Confers allele-specific recognition and virulence attenuation of HopZ1a. Immunity mediated by RPP13L4/ZAR1 is independent of several genes required by other resistance protein signaling pathways such as NDR1 and RAR1. Together with ZED1/ZRK5, involved in the regulation of the ambient temperature-sensitive intersection of growth and immune response in the absence of pathogens. This Arabidopsis thaliana (Mouse-ear cress) protein is Disease resistance RPP13-like protein 4 (RPP13L4).